We begin with the raw amino-acid sequence, 264 residues long: Apolipoprotein A-I (264 aa).

An N-terminal signal peptide occupies residues 1–18 (MRGVLVTLAVLFLTGTQA). Repeat copies occupy residues 67–88 (LKLADNLDTLSAAAAKLREDMA) and 89–110 (PYYKEVREMWLKDTEALRAELT). The interval 67–264 (LKLADNLDTL…FLDELQKSVA (198 aa)) is 10 X approximate tandem repeats. The stretch at 111–121 (KDLEEVKEKIR) is one 3; half-length repeat. 5 tandem repeats follow at residues 122–143 (PFLDQFSAKWTEELEQYRQRLT), 144–165 (PVAQELKELTKQKVELMQAKLT), 166–187 (PVAEEARDRLRGHVEELRKNLA), 188–209 (PYSDELRQKLSQKLEEIREKGI), and 210–231 (PQASEYQAKVMEQLSNLREKMT). Residues 232–242 (PLVQEFRERLT) form a 9; half-length repeat. Copy 10 of the repeat occupies 243–264 (PYAENLKNRLISFLDELQKSVA).

Belongs to the apolipoprotein A1/A4/E family. As to quaternary structure, homodimer. As to expression, major protein of plasma HDL, also found in chylomicrons.

The protein localises to the secreted. Its function is as follows. Participates in the reverse transport of cholesterol from tissues to the liver for excretion by promoting cholesterol efflux from tissues and by acting as a cofactor for the lecithin cholesterol acyltransferase (LCAT). This is Apolipoprotein A-I (APOA1) from Gallus gallus (Chicken).